Reading from the N-terminus, the 237-residue chain is Exosome complex component Rrp4 (237 aa).

Residues 72 to 144 (GHIVVGKVVD…LSKDPVLTIK (73 aa)) form the S1 motif domain. One can recognise a KH domain in the interval 152-211 (PRGTLVEIPPQKVPRVIGRRGSMVSMIEDLLGVKLIVGQNGRIVVVGDDPQRVEIAVLAV).

It belongs to the RRP4 family. In terms of assembly, component of the archaeal exosome complex. Forms a trimer of Rrp4 and/or Csl4 subunits. The trimer associates with a hexameric ring-like arrangement composed of 3 Rrp41-Rrp42 heterodimers.

It localises to the cytoplasm. Functionally, non-catalytic component of the exosome, which is a complex involved in RNA degradation. Increases the RNA binding and the efficiency of RNA degradation. Confers strong poly(A) specificity to the exosome. This is Exosome complex component Rrp4 from Thermofilum pendens (strain DSM 2475 / Hrk 5).